The sequence spans 463 residues: MAVDTMESVAVVAVPFPAQGHLNQLLHLSLLLASRGLSVHYAAPPPHVRQARARVHGWDPRALGSIHFHDLDVPAYDSPAPDLAAPSPFPNHLMPMFEAFAAAARAPLAALLQRLSTSYRRVAVVFDRLNPFAATEAARLANADAFGLQCVAISYTVGWLDPGHRLLSDYGLQFLPPDDCMSREFVDLVFRMEEEEQGAPVAGLVMNTCRALEGEFLDAVAAQPPFQGQRFFAVGPLNPLLLDADARTAPRHECLEWLDRQPPESVLYVSFGTTSCLHADQVAELAAALKGSKQRFVWVLRDADRADIYAESGDSRHAKFLSEFTRETEGTGLVVTGWAPQLEILAHGATAAFMSHCGWNSIIESLSHGKPVLAWPMHSDQPWDSELLCNYFKAGLLVRPWEKHAEIIPAQAIQKVIEEAMLSDSGMAVRQRAKELGEAVRASVADGGNSRKDLDDFIGYITR.

Catalysis depends on H21, which acts as the Proton acceptor. The an anthocyanidin site is built by H21 and N91. D127 serves as the catalytic Charge relay. Residues A339, Q341, H356, W359, N360, S361, E364, D380, and Q381 each contribute to the UDP-alpha-D-glucose site.

This sequence belongs to the UDP-glycosyltransferase family. Highly expressed in root. Expressed at much lower level in kernel. Weakly or not expressed in expressed in stems and leaves.

It carries out the reaction cis-zeatin + UDP-alpha-D-glucose = O-beta-D-glucosyl-cis-zeatin + UDP + H(+). Functionally, utilizes UDP-glucose as the sugar donor and catalyzes the formation of O-beta-D-glucosyl-cis-zeatin from cis-zeatin. May regulate active versus storage forms of cytokinins and could have an impact on seed growth. The polypeptide is Cis-zeatin O-glucosyltransferase 2 (Zea mays (Maize)).